The primary structure comprises 68 residues: Prokaryotic ubiquitin-like protein Pup (68 aa).

Residues 1 to 37 form a disordered region; sequence MAQERIFGTGSRREDEPDTPAPVDPPVSGAAQAQRDM. The segment at 24–62 is ARC ATPase binding; it reads DPPVSGAAQAQRDMQGTDDLLAEIDGVLETNAEAFVKGF. A Deamidated glutamine modification is found at Q68. An Isoglutamyl lysine isopeptide (Gln-Lys) (interchain with K-? in acceptor proteins) cross-link involves residue Q68.

This sequence belongs to the prokaryotic ubiquitin-like protein family. In terms of assembly, strongly interacts with the proteasome-associated ATPase ARC through a hydrophobic interface; the interacting region of Pup lies in its C-terminal half. There is one Pup binding site per ARC hexamer ring. Post-translationally, is modified by deamidation of its C-terminal glutamine to glutamate by the deamidase Dop, a prerequisite to the subsequent pupylation process.

The protein operates within protein degradation; proteasomal Pup-dependent pathway. Its function is as follows. Protein modifier that is covalently attached to lysine residues of substrate proteins, thereby targeting them for proteasomal degradation. The tagging system is termed pupylation. The chain is Prokaryotic ubiquitin-like protein Pup from Kocuria rhizophila (strain ATCC 9341 / DSM 348 / NBRC 103217 / DC2201).